The primary structure comprises 129 residues: MIQESVATGRRKQAVSSVRLRSGNGKIDVNGKTLEQYFPLEVQRATILAPLRMLGDVNSFDLIIRVSGGGVQGQVIATRLGLARAVLQEKEDMKQELKAQGFLTRDPRKKERKKYGRKKARKSFQFSKR.

Residues 97 to 129 (LKAQGFLTRDPRKKERKKYGRKKARKSFQFSKR) are disordered. A compositionally biased stretch (basic residues) spans 110–129 (KERKKYGRKKARKSFQFSKR).

This sequence belongs to the universal ribosomal protein uS9 family.

This is Small ribosomal subunit protein uS9 from Chlamydia trachomatis serovar A (strain ATCC VR-571B / DSM 19440 / HAR-13).